A 428-amino-acid chain; its full sequence is Elongation factor 1-alpha (428 aa).

Residues 5–225 (KPILNVAFIG…DGFQPPEKPT (221 aa)) enclose the tr-type G domain. Residues 14 to 21 (GHVDAGKS) form a G1 region. 14-21 (GHVDAGKS) serves as a coordination point for GTP. Serine 21 contacts Mg(2+). Positions 70-74 (GVTID) are G2. A G3 region spans residues 91 to 94 (DCPG). GTP contacts are provided by residues 91 to 95 (DCPGH) and 149 to 152 (NKMD). The interval 149–152 (NKMD) is G4. Residues 189–191 (ASL) are G5.

Belongs to the TRAFAC class translation factor GTPase superfamily. Classic translation factor GTPase family. EF-Tu/EF-1A subfamily.

Its subcellular location is the cytoplasm. It carries out the reaction GTP + H2O = GDP + phosphate + H(+). In terms of biological role, GTP hydrolase that promotes the GTP-dependent binding of aminoacyl-tRNA to the A-site of ribosomes during protein biosynthesis. The protein is Elongation factor 1-alpha of Methanococcus vannielii (strain ATCC 35089 / DSM 1224 / JCM 13029 / OCM 148 / SB).